A 181-amino-acid polypeptide reads, in one-letter code: Probable mitochondrial import inner membrane translocase subunit tim-17B.1 (181 aa).

Transmembrane regions (helical) follow at residues 17 to 37 (IGSA…FGGY), 61 to 81 (GVQF…LVAI), and 109 to 129 (VMAG…GVGL). Residues 137–181 (AMMDPTQPPPEALDDPRSLGQKSQAEPGLDQTRPFGIPTGLPNLS) are disordered.

Belongs to the Tim17/Tim22/Tim23 family.

It localises to the mitochondrion inner membrane. In terms of biological role, essential component of the TIM23 complex, a complex that mediates the translocation of transit peptide-containing proteins across the mitochondrial inner membrane. This is Probable mitochondrial import inner membrane translocase subunit tim-17B.1 from Caenorhabditis elegans.